The primary structure comprises 472 residues: Uronate isomerase (472 aa).

It belongs to the metallo-dependent hydrolases superfamily. Uronate isomerase family.

The catalysed reaction is D-glucuronate = D-fructuronate. It catalyses the reaction aldehydo-D-galacturonate = keto-D-tagaturonate. It participates in carbohydrate metabolism; pentose and glucuronate interconversion. The chain is Uronate isomerase from Halalkalibacterium halodurans (strain ATCC BAA-125 / DSM 18197 / FERM 7344 / JCM 9153 / C-125) (Bacillus halodurans).